Here is a 669-residue protein sequence, read N- to C-terminus: Protein ENTREP3 (669 aa).

The next 3 membrane-spanning stretches (helical) occupy residues leucine 34 to valine 54, serine 67 to tryptophan 87, and phenylalanine 91 to alanine 111. Residue asparagine 160 is glycosylated (N-linked (GlcNAc...) asparagine). Residues leucine 174 to valine 194 traverse the membrane as a helical segment. Phosphoserine occurs at positions 359 and 390. Disordered regions lie at residues phenylalanine 387–alanine 420, proline 445–serine 502, and arginine 550–threonine 571. Positions alanine 399 to proline 408 are enriched in low complexity. Serine 494 carries the phosphoserine modification. Serine 575 carries the post-translational modification Phosphoserine. The interval arginine 597–glutamate 624 is disordered.

It belongs to the ENTREP family. May interact with WWOX.

It localises to the membrane. The chain is Protein ENTREP3 from Mus musculus (Mouse).